Here is a 595-residue protein sequence, read N- to C-terminus: UvrABC system protein C (595 aa).

In terms of domain architecture, GIY-YIG spans 17–94 (IEPGCYLMKD…IKQYQPRYNI (78 aa)). Positions 199–234 (KTILHNLEQKMQESSESLDFERAKEYRDLIQHIHNL) constitute a UVR domain.

The protein belongs to the UvrC family. In terms of assembly, interacts with UvrB in an incision complex.

Its subcellular location is the cytoplasm. Functionally, the UvrABC repair system catalyzes the recognition and processing of DNA lesions. UvrC both incises the 5' and 3' sides of the lesion. The N-terminal half is responsible for the 3' incision and the C-terminal half is responsible for the 5' incision. This Staphylococcus saprophyticus subsp. saprophyticus (strain ATCC 15305 / DSM 20229 / NCIMB 8711 / NCTC 7292 / S-41) protein is UvrABC system protein C.